The primary structure comprises 147 residues: Large ribosomal subunit protein bL9 (147 aa).

It belongs to the bacterial ribosomal protein bL9 family.

Binds to the 23S rRNA. In Campylobacter lari (strain RM2100 / D67 / ATCC BAA-1060), this protein is Large ribosomal subunit protein bL9.